Here is a 305-residue protein sequence, read N- to C-terminus: Glycine--tRNA ligase alpha subunit (305 aa).

It belongs to the class-II aminoacyl-tRNA synthetase family. As to quaternary structure, tetramer of two alpha and two beta subunits.

The protein resides in the cytoplasm. It carries out the reaction tRNA(Gly) + glycine + ATP = glycyl-tRNA(Gly) + AMP + diphosphate. This is Glycine--tRNA ligase alpha subunit from Janthinobacterium sp. (strain Marseille) (Minibacterium massiliensis).